We begin with the raw amino-acid sequence, 424 residues long: Inositol phosphosphingolipids phospholipase C (424 aa).

Mg(2+) is bound at residue glutamate 49. Histidine 289 serves as the catalytic Proton acceptor. The next 2 helical transmembrane spans lie at leucine 335–cysteine 357 and valine 364–leucine 386.

It belongs to the neutral sphingomyelinase family. Mg(2+) is required as a cofactor.

The protein resides in the cell membrane. Its subcellular location is the endoplasmic reticulum membrane. Its pathway is lipid metabolism; sphingolipid metabolism. Functionally, inositol phosphosphingolipids phospholipase essential for the coordination of cell wall formation. Responsible for the hydrolysis of the phosphosphingolipids (IPS), inositol phosphorylceramide (IPC), mannosylinositol phosphorylceramide (MIPC), and mannosyldiinositol phosphorylceramide (M(IP)2C). This Schizosaccharomyces pombe (strain 972 / ATCC 24843) (Fission yeast) protein is Inositol phosphosphingolipids phospholipase C (css1).